Here is a 117-residue protein sequence, read N- to C-terminus: UPF0122 protein Teth514_1714 (117 aa).

Belongs to the UPF0122 family.

In terms of biological role, might take part in the signal recognition particle (SRP) pathway. This is inferred from the conservation of its genetic proximity to ftsY/ffh. May be a regulatory protein. The sequence is that of UPF0122 protein Teth514_1714 from Thermoanaerobacter sp. (strain X514).